Here is a 315-residue protein sequence, read N- to C-terminus: Methionyl-tRNA formyltransferase (315 aa).

(6S)-5,6,7,8-tetrahydrofolate is bound at residue 112–115 (SLLP).

It belongs to the Fmt family.

The catalysed reaction is L-methionyl-tRNA(fMet) + (6R)-10-formyltetrahydrofolate = N-formyl-L-methionyl-tRNA(fMet) + (6S)-5,6,7,8-tetrahydrofolate + H(+). Attaches a formyl group to the free amino group of methionyl-tRNA(fMet). The formyl group appears to play a dual role in the initiator identity of N-formylmethionyl-tRNA by promoting its recognition by IF2 and preventing the misappropriation of this tRNA by the elongation apparatus. The protein is Methionyl-tRNA formyltransferase of Leptospira borgpetersenii serovar Hardjo-bovis (strain JB197).